A 226-amino-acid chain; its full sequence is UPF0758 protein PputW619_0186 (226 aa).

Positions 102-224 (ALESPSAVRR…PLSMVEQGWI (123 aa)) constitute an MPN domain. Zn(2+)-binding residues include His-173, His-175, and Asp-186. A JAMM motif motif is present at residues 173–186 (HNHPSGNSEPSQDD).

This sequence belongs to the UPF0758 family.

This is UPF0758 protein PputW619_0186 from Pseudomonas putida (strain W619).